The sequence spans 277 residues: Hematopoietically-expressed homeobox protein HHEX (277 aa).

Disordered regions lie at residues 47-69 (AAPA…NSSF) and 199-277 (WRRL…SATR). A compositionally biased stretch (pro residues) spans 52-63 (HSLPAPPPPTLP). Positions 144 to 203 (RKGGQVRFSNEQTIELEKKFETQKYLSPPERKRLAKLLQLSERQVKTWFQNRRAKWRRLK) form a DNA-binding region, homeobox. The segment covering 210–226 (TKKEEAEGTGDHGDPRS) has biased composition (basic and acidic residues). Acidic residues predominate over residues 250–266 (EDPESDVSDDSDQEVDI).

In all hematopoietic tissues except peripheral blood erythrocytes and in the liver and lung.

The protein resides in the nucleus. In terms of biological role, recognizes the DNA sequence 5'-ATTAA-3'. Transcriptional repressor. May play a role in hematopoietic differentiation. The sequence is that of Hematopoietically-expressed homeobox protein HHEX (HHEX) from Gallus gallus (Chicken).